The chain runs to 557 residues: Nucleolin 1 (557 aa).

Disordered regions lie at residues 1 to 297, 376 to 398, and 474 to 557; these read MGKS…GGSK, GERGERPAFTPQSGNFRSGGDGG, and LVVD…FGDE. Residues 49 to 63 show a composition bias toward basic and acidic residues; that stretch reads QKEKAVKKVPKKVES. Composition is skewed to acidic residues over residues 64–74, 91–101, and 124–135; these read SDDSDSESEEE, ESSDDSSSDDE, and SSSDDDSSDEEV. Low complexity predominate over residues 174–184; sequence AKIAKPAAKDS. Residues 186-197 show a composition bias toward acidic residues; that stretch reads SSDDDSDEDSED. Over residues 203 to 217 the composition is skewed to low complexity; sequence KKAAPAAAKAASSSD. Over residues 218-229 the composition is skewed to acidic residues; sequence SSDEDSDEESED. Positions 230 to 247 are enriched in basic and acidic residues; that stretch reads EKPAQKKADTKASKKSSS. The span at 249–263 shows a compositional bias: acidic residues; that stretch reads ESSESEEDESEDEEE. The segment covering 264 to 281 has biased composition (basic and acidic residues); it reads TPKKKSSDVEMVDAEKSS. The RRM 1 domain maps to 297 to 374; it reads KTLFAANLSF…REIRLDIAQE (78 aa). The region spanning 401 to 481 is the RRM 2 domain; it reads KKIFVKGFDA…FYLVVDEPRP (81 aa). A compositionally biased stretch (gly residues) spans 485-503; it reads SSGGGGFGRGNGRFGSGGG.

As to quaternary structure, interacts with THAL in the nucleus. Expressed in roots, leaves, shoots and flowers.

The protein resides in the nucleus. It is found in the nucleolus. Its function is as follows. Involved in pre-rRNA processing and ribosome assembly. Is associated with intranucleolar chromatin and pre-ribosomal particles and plays a role in controlling activation and repression of a specific subset of rRNA genes located in distinctive nucleolar organizer regions. Binds specifically rDNA chromatin and may be required to maintain rDNA chromatin structure, but is probably not required for the overall histone methylation status of 45S rRNA genes. Involved in leaf polarity establishment by functioning cooperatively with AS1 to repress abaxial genes ARF3, ARF4, KAN1, KAN2, YAB1 and YAB5, and the knox homeobox genes KNAT1, KNAT2, KNAT6, and STM to promote adaxial development in leaf primordia at shoot apical meristems at high temperatures. The sequence is that of Nucleolin 1 from Arabidopsis thaliana (Mouse-ear cress).